The sequence spans 183 residues: tRNA-splicing endonuclease (183 aa).

Catalysis depends on residues tyrosine 120, histidine 128, and lysine 159.

It belongs to the tRNA-intron endonuclease family. Archaeal short subfamily. Homotetramer; although the tetramer contains four active sites, only two participate in the cleavage. Therefore, it should be considered as a dimer of dimers.

The enzyme catalyses pretRNA = a 3'-half-tRNA molecule with a 5'-OH end + a 5'-half-tRNA molecule with a 2',3'-cyclic phosphate end + an intron with a 2',3'-cyclic phosphate and a 5'-hydroxyl terminus.. In terms of biological role, endonuclease that removes tRNA introns. Cleaves pre-tRNA at the 5'- and 3'-splice sites to release the intron. The products are an intron and two tRNA half-molecules bearing 2',3' cyclic phosphate and 5'-OH termini. Recognizes a pseudosymmetric substrate in which 2 bulged loops of 3 bases are separated by a stem of 4 bp. In Pyrobaculum islandicum (strain DSM 4184 / JCM 9189 / GEO3), this protein is tRNA-splicing endonuclease.